A 249-amino-acid polypeptide reads, in one-letter code: Glutathione S-transferase tcpG (249 aa).

The GST N-terminal domain occupies 20 to 109; it reads LYVRKAIPAP…YLCDKHDKDG (90 aa). The GST C-terminal domain maps to 115–249; it reads NATERAQVTS…TEEEIELHGR (135 aa).

The protein belongs to the GST superfamily.

It carries out the reaction RX + glutathione = an S-substituted glutathione + a halide anion + H(+). Its pathway is secondary metabolite biosynthesis. Glutathione S-transferase; part of the gene cluster that mediates the biosynthesis of an unusual class of epipolythiodioxopiperazines (ETPs) lacking the reactive thiol group important for toxicity. Firstly, L-tyrosine is prenylated by tcpD, before undergoing condensation with L-glycine in a reaction catalyzed by the NRPS tcpP leading to the diketopiperazine (DKP) backbone. Afterwards the alpha-carbon of tyrosine is oxidized by the cytochrome P450 tcpC to form a hydroxyl group. However, in contrast other ETP biosynthesis pathways studied so far, tcpC is not able to bishydroxylate the DKP at both alpha-carbon positions, but hydroxylates the alpha-carbon of the tyrosine part and the nitrogen of the glycine part. The next steps involve an alpha,beta-elimination reaction catalyzed by tcpI, a methylation by the methyltransferase tcpN the action of the four enzyme cascade tcpG/K/J/I. Due to a dysfunctional cytochrome P450 monooxygenase tcpC, the pathway leads to the biosynthesis of probable non-toxic metabolites lacking the reactive thiol group. This is Glutathione S-transferase tcpG from Claviceps purpurea (strain 20.1) (Ergot fungus).